The following is a 374-amino-acid chain: tRNA-specific 2-thiouridylase MnmA (374 aa).

Residues 12 to 19 (GMSGGVDS) and Met38 contribute to the ATP site. An interaction with target base in tRNA region spans residues 98–100 (NPD). The active-site Nucleophile is the Cys103. A disulfide bridge connects residues Cys103 and Cys207. Gly128 serves as a coordination point for ATP. The interaction with tRNA stretch occupies residues 157 to 159 (KDQ). Residue Cys207 is the Cysteine persulfide intermediate of the active site. An interaction with tRNA region spans residues 321–322 (RY).

The protein belongs to the MnmA/TRMU family.

It is found in the cytoplasm. The enzyme catalyses S-sulfanyl-L-cysteinyl-[protein] + uridine(34) in tRNA + AH2 + ATP = 2-thiouridine(34) in tRNA + L-cysteinyl-[protein] + A + AMP + diphosphate + H(+). Catalyzes the 2-thiolation of uridine at the wobble position (U34) of tRNA, leading to the formation of s(2)U34. The sequence is that of tRNA-specific 2-thiouridylase MnmA from Aliivibrio fischeri (strain MJ11) (Vibrio fischeri).